A 288-amino-acid polypeptide reads, in one-letter code: Fructose-bisphosphate aldolase (288 aa).

Position 49 (S49) interacts with D-glyceraldehyde 3-phosphate. Residue D84 is the Proton donor of the active site. H85, D105, E135, and H177 together coordinate Zn(2+). Dihydroxyacetone phosphate is bound at residue G178. Residue H206 participates in Zn(2+) binding. Dihydroxyacetone phosphate-binding positions include 207–209 (GGS) and 228–231 (NINT).

This sequence belongs to the class II fructose-bisphosphate aldolase family. In terms of assembly, homodimer. Zn(2+) is required as a cofactor.

It carries out the reaction beta-D-fructose 1,6-bisphosphate = D-glyceraldehyde 3-phosphate + dihydroxyacetone phosphate. It participates in carbohydrate degradation; glycolysis; D-glyceraldehyde 3-phosphate and glycerone phosphate from D-glucose: step 4/4. Its function is as follows. Catalyzes the aldol condensation of dihydroxyacetone phosphate (DHAP or glycerone-phosphate) with glyceraldehyde 3-phosphate (G3P) to form fructose 1,6-bisphosphate (FBP) in gluconeogenesis and the reverse reaction in glycolysis. In Mycoplasma pneumoniae (strain ATCC 29342 / M129 / Subtype 1) (Mycoplasmoides pneumoniae), this protein is Fructose-bisphosphate aldolase (fba).